The chain runs to 334 residues: Cytosolic Fe-S cluster assembly factor NBP35 (334 aa).

4 residues coordinate [4Fe-4S] cluster: cysteine 33, cysteine 47, cysteine 50, and cysteine 56. Glycine 86 to serine 93 contacts ATP. 2 residues coordinate [4Fe-4S] cluster: cysteine 259 and cysteine 262.

The protein belongs to the Mrp/NBP35 ATP-binding proteins family. NUBP1/NBP35 subfamily. Heterotetramer of 2 NBP35 and 2 CFD1 chains. [4Fe-4S] cluster serves as cofactor.

It is found in the cytoplasm. The protein localises to the nucleus. In terms of biological role, component of the cytosolic iron-sulfur (Fe/S) protein assembly (CIA) machinery. Required for maturation of extramitochondrial Fe-S proteins. The NBP35-CFD1 heterotetramer forms a Fe-S scaffold complex, mediating the de novo assembly of an Fe-S cluster and its transfer to target apoproteins. Required for biogenesis and export of both ribosomal subunits, which may reflect a role in assembly of the Fe/S clusters in RLI1, a protein which performs rRNA processing and ribosome export. The chain is Cytosolic Fe-S cluster assembly factor NBP35 from Candida glabrata (strain ATCC 2001 / BCRC 20586 / JCM 3761 / NBRC 0622 / NRRL Y-65 / CBS 138) (Yeast).